The primary structure comprises 321 residues: Fibronectin type III domain-containing protein 8 (321 aa).

The Fibronectin type-III domain occupies 175–277; sequence VPEAPFVCEH…KPYKFATVAT (103 aa).

The chain is Fibronectin type III domain-containing protein 8 (FNDC8) from Bos taurus (Bovine).